A 359-amino-acid chain; its full sequence is 3-dehydroquinate synthase (359 aa).

NAD(+)-binding positions include 71 to 76 (DGEAHK), 105 to 109 (GVIGD), 129 to 130 (TT), Lys-142, Lys-151, and 169 to 172 (TLHT). Zn(2+) contacts are provided by Glu-184, His-247, and His-264.

It belongs to the sugar phosphate cyclases superfamily. Dehydroquinate synthase family. NAD(+) is required as a cofactor. The cofactor is Co(2+). It depends on Zn(2+) as a cofactor.

It is found in the cytoplasm. It catalyses the reaction 7-phospho-2-dehydro-3-deoxy-D-arabino-heptonate = 3-dehydroquinate + phosphate. Its pathway is metabolic intermediate biosynthesis; chorismate biosynthesis; chorismate from D-erythrose 4-phosphate and phosphoenolpyruvate: step 2/7. Its function is as follows. Catalyzes the conversion of 3-deoxy-D-arabino-heptulosonate 7-phosphate (DAHP) to dehydroquinate (DHQ). This Neisseria meningitidis serogroup B (strain ATCC BAA-335 / MC58) protein is 3-dehydroquinate synthase.